We begin with the raw amino-acid sequence, 174 residues long: Xanthine-guanine phosphoribosyltransferase (174 aa).

Residues 49–50 and 108–116 each bind 5-phospho-alpha-D-ribose 1-diphosphate; these read RG and DDLVDTGAT. Residue D109 participates in Mg(2+) binding. Positions 112 and 155 each coordinate guanine. 2 residues coordinate xanthine: D112 and I155. GMP contacts are provided by residues 112-116 and 154-155; these read DTGAT and WI.

It belongs to the purine/pyrimidine phosphoribosyltransferase family. XGPT subfamily. As to quaternary structure, homotetramer. Mg(2+) is required as a cofactor.

The protein resides in the cell inner membrane. The catalysed reaction is GMP + diphosphate = guanine + 5-phospho-alpha-D-ribose 1-diphosphate. The enzyme catalyses XMP + diphosphate = xanthine + 5-phospho-alpha-D-ribose 1-diphosphate. It catalyses the reaction IMP + diphosphate = hypoxanthine + 5-phospho-alpha-D-ribose 1-diphosphate. It participates in purine metabolism; GMP biosynthesis via salvage pathway; GMP from guanine: step 1/1. Its pathway is purine metabolism; XMP biosynthesis via salvage pathway; XMP from xanthine: step 1/1. Purine salvage pathway enzyme that catalyzes the transfer of the ribosyl-5-phosphate group from 5-phospho-alpha-D-ribose 1-diphosphate (PRPP) to the N9 position of the 6-oxopurines guanine and xanthine to form the corresponding ribonucleotides GMP (guanosine 5'-monophosphate) and XMP (xanthosine 5'-monophosphate), with the release of PPi. To a lesser extent, also acts on hypoxanthine. The chain is Xanthine-guanine phosphoribosyltransferase from Rhodopseudomonas palustris (strain BisB18).